Here is a 389-residue protein sequence, read N- to C-terminus: tRNA-specific 2-thiouridylase MnmA (389 aa).

ATP is bound by residues 9–16 (GMSGGVDS) and M35. Residues 95–97 (NPD) form an interaction with target base in tRNA region. Catalysis depends on C100, which acts as the Nucleophile. Cysteines 100 and 196 form a disulfide. Residue G124 participates in ATP binding. The tract at residues 146 to 148 (KDQ) is interaction with tRNA. C196 acts as the Cysteine persulfide intermediate in catalysis. The tract at residues 308–309 (RY) is interaction with tRNA.

It belongs to the MnmA/TRMU family.

Its subcellular location is the cytoplasm. It carries out the reaction S-sulfanyl-L-cysteinyl-[protein] + uridine(34) in tRNA + AH2 + ATP = 2-thiouridine(34) in tRNA + L-cysteinyl-[protein] + A + AMP + diphosphate + H(+). In terms of biological role, catalyzes the 2-thiolation of uridine at the wobble position (U34) of tRNA, leading to the formation of s(2)U34. The polypeptide is tRNA-specific 2-thiouridylase MnmA (Burkholderia ambifaria (strain MC40-6)).